The chain runs to 1531 residues: Multidrug resistance-associated protein 1 (1531 aa).

Over 1–33 (MALRGFCSADGSDPLWDWNVTWNTSNPDFTKCF) the chain is Extracellular. Asn-19 and Asn-23 each carry an N-linked (GlcNAc...) asparagine glycan. Residues 34–54 (QNTVLVWVPCFYLWACFPFYF) traverse the membrane as a helical segment. At 55–74 (LYLSRHDRGYIQMTPLNKTK) the chain is on the cytoplasmic side. The helical transmembrane segment at 75–95 (TALGFLLWIVCWADLFYSFWE) threads the bilayer. Over 96 to 100 (RSRGI) the chain is Extracellular. Residues 101-121 (FLAPVFLVSPTLLGITMLLAT) traverse the membrane as a helical segment. The Cytoplasmic segment spans residues 122 to 133 (FLIQLERRKGVQ). The helical transmembrane segment at 134–154 (SSGIMLTFWLVALVCALAILR) threads the bilayer. Topologically, residues 155-172 (SKIMTALKEDAQVDLFRD) are extracellular. Residues 173–193 (ITFYVYFSLLLIQLVLSCFSD) traverse the membrane as a helical segment. Residues 194–316 (RSPLFSETIH…KEWNPSLFKV (123 aa)) are Cytoplasmic-facing. Tyr-277 is modified (phosphotyrosine). Ser-289 carries the phosphoserine modification. Residues 317 to 337 (LYKTFGPYFLMSFFFKAIHDL) form a helical membrane-spanning segment. Residues 325–608 (FLMSFFFKAI…LPMVISSIVQ (284 aa)) enclose the ABC transmembrane type-1 1 domain. The Extracellular segment spans residues 338-363 (MMFSGPQILKLLIKFVNDTKAPDWQG). A helical transmembrane segment spans residues 364–384 (YFYTVLLFVTACLQTLVLHQY). Residues 385–440 (FHICFVSGMRIKTAVIGAVYRKALVITNSARKSSTVGEIVNLMSVDAQRFMDLATY) lie on the Cytoplasmic side of the membrane. A helical membrane pass occupies residues 441–461 (INMIWSAPLQVILALYLLWLN). Residues 462-464 (LGP) lie on the Extracellular side of the membrane. A helical membrane pass occupies residues 465-485 (SVLAGVAVMVLMVPVNAVMAM). Residues 486–547 (KTKTYQVAHM…VLKKSAYLSA (62 aa)) lie on the Cytoplasmic side of the membrane. The residue at position 503 (Lys-503) is an N6-succinyllysine. Residues 548-568 (VGTFTWVCTPFLVALCTFAVY) traverse the membrane as a helical segment. The Extracellular segment spans residues 569-590 (VTIDENNILDAQTAFVSLALFN). A helical membrane pass occupies residues 591–611 (ILRFPLNILPMVISSIVQASV). Residues 612 to 967 (SLKRLRIFLS…VKLSVYWDYM (356 aa)) are Cytoplasmic-facing. One can recognise an ABC transporter 1 domain in the interval 644–868 (ITVRNATFTW…DGAFAEFLRT (225 aa)). ATP contacts are provided by residues Trp-653, 678–685 (GQVGCGKS), and Gln-713. A phosphoserine mark is found at Ser-905, Ser-915, and Ser-930. The chain crosses the membrane as a helical span at residues 968–988 (KAIGLFISFLSIFLFMCNHVS). An ABC transmembrane type-1 2 domain is found at 975–1256 (SFLSIFLFMC…LVRMSSEMET (282 aa)). At 989 to 1025 (ALASNYWLSLWTDDPIVNGTQEHTKVRLSVYGALGIS) the chain is on the extracellular side. N-linked (GlcNAc...) asparagine glycosylation occurs at Asn-1006. Residues 1026 to 1046 (QGIAVFGYSMAVSIGGILASR) traverse the membrane as a helical segment. The Cytoplasmic segment spans residues 1047–1089 (CLHVDLLHSILRSPMSFFERTPSGNLVNRFSKELDTVDSMIPE). A helical membrane pass occupies residues 1090–1110 (VIKMFMGSLFNVIGACIVILL). Ala-1111 is a topological domain (extracellular). Residues 1112–1132 (TPIAAIIIPPLGLIYFFVQRF) traverse the membrane as a helical segment. The Cytoplasmic segment spans residues 1133-1203 (YVASSRQLKR…VANRWLAVRL (71 aa)). Residues 1204-1224 (ECVGNCIVLFAALFAVISRHS) traverse the membrane as a helical segment. The Extracellular segment spans residues 1225-1226 (LS). A helical transmembrane segment spans residues 1227 to 1247 (AGLVGLSVSYSLQVTTYLNWL). Residues 1248–1531 (VRMSSEMETN…YSMAKDAGLV (284 aa)) are Cytoplasmic-facing. An ABC transporter 2 domain is found at 1293 to 1527 (VEFRNYCLRY…RGLFYSMAKD (235 aa)). An ATP-binding site is contributed by 1327–1334 (GRTGAGKS).

It belongs to the ABC transporter superfamily. ABCC family. Conjugate transporter (TC 3.A.1.208) subfamily. (Microbial infection) Interacts with human cytomegalovirus protein UL138; this interaction mediates MRP1 degradation via the lysosome. As to expression, lung, testis and peripheral blood mononuclear cells.

The protein localises to the cell membrane. It is found in the basolateral cell membrane. It catalyses the reaction ATP + H2O + xenobioticSide 1 = ADP + phosphate + xenobioticSide 2.. The catalysed reaction is an S-substituted glutathione(in) + ATP + H2O = an S-substituted glutathione(out) + ADP + phosphate + H(+). The enzyme catalyses sphing-4-enine 1-phosphate(in) + ATP + H2O = sphing-4-enine 1-phosphate(out) + ADP + phosphate + H(+). It carries out the reaction leukotriene C4(in) + ATP + H2O = leukotriene C4(out) + ADP + phosphate + H(+). It catalyses the reaction 17beta-estradiol 17-O-(beta-D-glucuronate)(in) + ATP + H2O = 17beta-estradiol 17-O-(beta-D-glucuronate)(out) + ADP + phosphate + H(+). The catalysed reaction is daunorubicin(in) + ATP + H2O = daunorubicin(out) + ADP + phosphate + H(+). The enzyme catalyses vincristine(in) + ATP + H2O = vincristine(out) + ADP + phosphate + H(+). It carries out the reaction 2',3'-cGAMP(in) + ATP + H2O = 2',3'-cGAMP(out) + ADP + phosphate + H(+). It catalyses the reaction S-[(2E,6E,10E)-geranylgeranyl]-L-glutathione(in) + ATP + H2O = S-[(2E,6E,10E)-geranylgeranyl]-L-glutathione(out) + ADP + phosphate + H(+). The catalysed reaction is prostaglandin A2-S-(R)-glutathione(in) + ATP + H2O = prostaglandin A2-S-(R)-glutathione(out) + ADP + phosphate + H(+). The enzyme catalyses prostaglandin A2-S-(S)-glutathione(in) + ATP + H2O = prostaglandin A2-S-(S)-glutathione(out) + ADP + phosphate + H(+). With respect to regulation, MK 571 inhibits sphingosine 1-phosphate and leukotriene C4 export. In terms of biological role, mediates export of organic anions and drugs from the cytoplasm. Mediates ATP-dependent transport of glutathione and glutathione conjugates, leukotriene C4, estradiol-17-beta-o-glucuronide, methotrexate, antiviral drugs and other xenobiotics. Confers resistance to anticancer drugs by decreasing accumulation of drug in cells, and by mediating ATP- and GSH-dependent drug export. Hydrolyzes ATP with low efficiency. Catalyzes the export of sphingosine 1-phosphate from mast cells independently of their degranulation. Participates in inflammatory response by allowing export of leukotriene C4 from leukotriene C4-synthesizing cells. Mediates ATP-dependent, GSH-independent cyclic GMP-AMP (cGAMP) export. Thus, by limiting intracellular cGAMP concentrations negatively regulates the cGAS-STING pathway. Exports S-geranylgeranyl-glutathione (GGG) in lymphoid cells and stromal compartments of lymphoid organs. ABCC1 (via extracellular transport) with GGT5 (via GGG catabolism) establish GGG gradients within lymphoid tissues to position P2RY8-positive lymphocytes at germinal centers in lymphoid follicles and restrict their chemotactic transmigration from blood vessels to the bone marrow parenchyma. Mediates basolateral export of GSH-conjugated R- and S-prostaglandin A2 diastereomers in polarized epithelial cells. The polypeptide is Multidrug resistance-associated protein 1 (Homo sapiens (Human)).